Reading from the N-terminus, the 446-residue chain is Fatty acid desaturase 2 (446 aa).

At Met-1–Pro-132 the chain is on the cytoplasmic side. A Cytochrome b5 heme-binding domain is found at Glu-20 to Ala-97. A helical transmembrane segment spans residues Ala-133–Leu-153. His-154 is a topological domain (lumenal). A helical transmembrane segment spans residues Tyr-155 to Ala-175. The Cytoplasmic segment spans residues Gln-176–His-265. The short motif at His-182–His-186 is the Histidine box-1 element. A Histidine box-2 motif is present at residues His-219–His-223. The chain crosses the membrane as a helical span at residues Leu-266–Ile-286. At Lys-287–Arg-307 the chain is on the lumenal side. A helical transmembrane segment spans residues Phe-308 to Val-328. The Cytoplasmic segment spans residues Arg-329–Lys-446. The Histidine box-3 motif lies at Gln-384–His-388.

The protein belongs to the fatty acid desaturase type 1 family.

It is found in the endoplasmic reticulum membrane. It functions in the pathway lipid metabolism; polyunsaturated fatty acid biosynthesis. In terms of biological role, component of a lipid metabolic pathway that catalyzes biosynthesis of highly unsaturated fatty acids (HUFA) from precursor essential polyunsaturated fatty acids (PUFA) linoleic acid (LA) (18:2n-6) and alpha-linolenic acid (ALA) (18:3n-3). Catalyzes the first and rate limiting step in this pathway which is the desaturation of LA (18:2n-6) and ALA (18:3n-3) into gamma-linoleic acid (GLA) (18:3n-6) and stearidonic acid (18:4n-3) respectively and other desaturation steps. Highly unsaturated fatty acids (HUFA) play pivotal roles in many biological functions. The polypeptide is Fatty acid desaturase 2 (fads2) (Xenopus laevis (African clawed frog)).